The primary structure comprises 158 residues: Low molecular weight phosphotyrosine protein phosphatase (158 aa).

At Ala2 the chain carries N-acetylalanine. Catalysis depends on Cys13, which acts as the Nucleophile. Arg19 is a catalytic residue. Catalysis depends on Asp130, which acts as the Proton donor. Phosphotyrosine is present on residues Tyr132 and Tyr133.

The protein belongs to the low molecular weight phosphotyrosine protein phosphatase family. In terms of assembly, interacts with EPHA2; dephosphorylates EPHA2. Interacts with EPHB1. As to quaternary structure, interacts with the SH3 domain of SPTAN1. There is no interaction observed for isoform 2. Phosphorylated by LCK. Phosphorylation at Tyr-132 increases its phosphatase activity.

Its subcellular location is the cytoplasm. It catalyses the reaction O-phospho-L-tyrosyl-[protein] + H2O = L-tyrosyl-[protein] + phosphate. The enzyme catalyses a phosphate monoester + H2O = an alcohol + phosphate. Its activity is regulated as follows. Inhibited by sulfhydryl reagents. In terms of biological role, acts on tyrosine phosphorylated proteins, low-MW aryl phosphates and natural and synthetic acyl phosphates with differences in substrate specificity between isoform 1 and isoform 2. The polypeptide is Low molecular weight phosphotyrosine protein phosphatase (Rattus norvegicus (Rat)).